The following is a 911-amino-acid chain: MDFDSDSDGSHVSATPPRDSFPSSPPQLQSPAKHVPPVSRKMTSSSSRSKPKAPTHPPPNPSQEAPVPSPYPPPPPPSPLFTNLPFRICQSQPARFSSSVSSFSRLCSRASFTSVEKLKSDGVDFVPEPPLVEVIAPPKSVRRKPPNLITDTITSPPVKPMVFRSNGNGEGNFVKLNLNGKRGKKFPSKYKGVSKSRSSYSFRGKRYKKKEADGDGESLLEEESDLQKQIEDEANGFISSVEDAILAVKTEASDENLTKLLNLVYGYDSFRDGQLQAIKMILGGSSTMLVLPTGAGKSLCYQIPAMILPGITLVVSPLVSLMIDQLKHLPSIIKGGLLSSSQRPEEATETLRKLKEGIIKVLFVSPERLLNVEFLSMFRMSLSVSLVVVDEAHCVSEWSHNFRPSYMRLKASMLFSELKAECILAMTATATTMTLQAVMSSLEIPSTNLIQKSQLRDNFELSVSLSGANRMKDLLILMESPPYKEIRSIIVYCKFQYETDMISKYLRDNNINAKGYHSGLPAKDRVRIQESFCSNKIRVVVATVAFGMGLDKGDVGAVIHFSVPGSMEEYVQEIGRAGRDGRLSYCHLFYDNDTYLKLRSLAHSDGVDEYAVGKFLTHVFSTETKQHEKICSLVIESASQKFDMKEEVMQTILTHLELGEVQYLRMLPQLNICCTLNFHKSSPNTLAARSAIVAAILKKSHVKQGLHVFDIPAVASSICVATTDVLAEIQALKMKGEVTYELKDSAFCYTILKSPKEICSLSSHLTKWLTEIESCKVRKLDIMSSAAVAAISVSNTSELSSGAKQTRSLQSRIFDYFNGDEKCDSPSKATQNCAFLRADIKVFLQSNRQAKFTPRAIARIMHGVGSPAFPNSVWSKTHFWGRYMNVDFRVIMEAAQTELFNFVDRNAALAT.

The disordered stretch occupies residues 1-84 (MDFDSDSDGS…PPPSPLFTNL (84 aa)). Positions 20–48 (SFPSSPPQLQSPAKHVPPVSRKMTSSSSR) are enriched in low complexity. A compositionally biased stretch (pro residues) spans 54–79 (PTHPPPNPSQEAPVPSPYPPPPPPSP). Positions 278–448 (IKMILGGSST…MSSLEIPSTN (171 aa)) constitute a Helicase ATP-binding domain. Position 291-298 (291-298 (LPTGAGKS)) interacts with ATP. A DEAH box motif is present at residues 390 to 393 (DEAH). One can recognise a Helicase C-terminal domain in the interval 470 to 628 (RMKDLLILME…VFSTETKQHE (159 aa)).

The protein belongs to the helicase family. RecQ subfamily. As to expression, mostly expressed in roots, seedlings, shoots, shoot apical mersitem, flowers, and siliques.

It localises to the nucleus. It carries out the reaction Couples ATP hydrolysis with the unwinding of duplex DNA by translocating in the 3'-5' direction.. The enzyme catalyses ATP + H2O = ADP + phosphate + H(+). In terms of biological role, 3'-5' DNA helicase that may play a role in the repair of DNA. This Arabidopsis thaliana (Mouse-ear cress) protein is ATP-dependent DNA helicase Q-like 5 (RECQL5).